The chain runs to 171 residues: Actin-related protein 2/3 complex subunit 4 (171 aa).

It belongs to the ARPC4 family. In terms of assembly, component of the Arp2/3 complex composed of ARP2, ARP3, ARC40/p41-ARC, ARC35/p34-ARC, ARC18/p21-ARC, ARC19/p20-ARC and ARC16/p16-ARC.

The protein localises to the cytoplasm. It localises to the cytoskeleton. It is found in the actin patch. In terms of biological role, functions as actin-binding component of the Arp2/3 complex which is involved in regulation of actin polymerization and together with an activating nucleation-promoting factor (NPF) mediates the formation of branched actin networks. Seems to contact the mother actin filament. The sequence is that of Actin-related protein 2/3 complex subunit 4 (ARC19) from Saccharomyces cerevisiae (strain ATCC 204508 / S288c) (Baker's yeast).